Here is a 333-residue protein sequence, read N- to C-terminus: MQQYSSKYNKQAILLANLGTPDNYDTKSIKRYLKEFLSDPRVIEANPVLWKIILNLIILPIRAKKNVHTYKTVWNKQHNKSPLLFYTENLADKLDKKLDNYIVDYAMRYGNPSIESKIKNLQDQGATEIIIFPLYPQYSATTTATVYDEVYRVLSKLRWQPTIKGINPYYDNKFHIQTISQQIKEHLKKLDSTPDTVLFSFHGLPKEYFDKGDPYYCHCHKTYRLVKEELQNEYPNIDFELSFQSRFGPKKWLEPYTTVKLEEFAKQNKSVVVIAPGFSADCLETLEELAISEKENFIKKGGKEFSLIPCLNDSNQHVDMLYNIINEEICLKK.

Fe cation is bound by residues H202 and E284.

This sequence belongs to the ferrochelatase family.

The protein localises to the cytoplasm. It carries out the reaction heme b + 2 H(+) = protoporphyrin IX + Fe(2+). Its pathway is porphyrin-containing compound metabolism; protoheme biosynthesis; protoheme from protoporphyrin-IX: step 1/1. Functionally, catalyzes the ferrous insertion into protoporphyrin IX. In Francisella tularensis subsp. novicida (strain U112), this protein is Ferrochelatase.